A 260-amino-acid chain; its full sequence is UPF0328 protein ECU07_1870/ECU10_0030 (260 aa).

The protein belongs to the UPF0328 family.

This is UPF0328 protein ECU07_1870/ECU10_0030 from Encephalitozoon cuniculi (strain GB-M1) (Microsporidian parasite).